A 268-amino-acid chain; its full sequence is Glutamate racemase (268 aa).

Residues 9–10 (DS) and 41–42 (YG) contribute to the substrate site. Cys-73 functions as the Proton donor/acceptor in the catalytic mechanism. Residue 74-75 (NS) coordinates substrate. Cys-183 functions as the Proton donor/acceptor in the catalytic mechanism. Residue 184–185 (TH) participates in substrate binding.

The protein belongs to the aspartate/glutamate racemases family.

It catalyses the reaction L-glutamate = D-glutamate. Its pathway is cell wall biogenesis; peptidoglycan biosynthesis. Provides the (R)-glutamate required for cell wall biosynthesis. This chain is Glutamate racemase, found in Shewanella pealeana (strain ATCC 700345 / ANG-SQ1).